We begin with the raw amino-acid sequence, 206 residues long: Translation machinery-associated protein 22 (206 aa).

Residues 98–169 (VVIKREARTK…EVEKYIHSLL (72 aa)) enclose the SUI1 domain. Residues 184 to 206 (SQKKKKKPTDEANSNNNNNNNNK) are disordered. Over residues 196 to 206 (NSNNNNNNNNK) the composition is skewed to low complexity.

It belongs to the DENR family. Interacts with the 40S ribosomal subunit.

It localises to the cytoplasm. This Vanderwaltozyma polyspora (strain ATCC 22028 / DSM 70294 / BCRC 21397 / CBS 2163 / NBRC 10782 / NRRL Y-8283 / UCD 57-17) (Kluyveromyces polysporus) protein is Translation machinery-associated protein 22 (TMA22).